A 427-amino-acid chain; its full sequence is MSTSFENKATNRGIITFTISQDEIKPALDQAFNKVKKDLNVPGFRKGHMPRTVFNQKFGEEALYENALNLVLPKAYEAAVAELGLDVVAQPKIDVVSMEKGQDWKLTAEVVTKPEVKLGDYKDLSVEVDASKEVSAEEVDAKVERERNNLAELTVKDGEAAQGDTVVIDFVGSVDGVEFDGGKGDNFSLELGSGQFIPGFEEQLVGSKAGQTVDVNVTFPEDYQAEDLAGKDAKFVTTIHEVKTKEVPALDDELAKDIDDEVETLDELKAKYRKELESAKEIAFDDAVEGAAIELAVANAEIVELPEEMVHDEVHRAMNEFMGNMQRQGISPEMYFQLTGTTEEDLHKQYQADADKRVKTNLVIEAIAAAEGFEATDEEIEKEITDLASEYNMEADQVRGLLSADMLKHDIAMKKAVDVITSSATVK.

A PPIase FKBP-type domain is found at 163-248 (GDTVVIDFVG…IHEVKTKEVP (86 aa)).

This sequence belongs to the FKBP-type PPIase family. Tig subfamily.

It is found in the cytoplasm. The catalysed reaction is [protein]-peptidylproline (omega=180) = [protein]-peptidylproline (omega=0). Its function is as follows. Involved in protein export. Acts as a chaperone by maintaining the newly synthesized protein in an open conformation. Functions as a peptidyl-prolyl cis-trans isomerase. The polypeptide is Trigger factor (Streptococcus agalactiae serotype III (strain NEM316)).